The sequence spans 296 residues: MKIIVPATSANLGAGFDSIGIAVNLYLTVEVLEESNDWKIDHDLGNNIPTDEKNLLLTTLSAVLKAKNSSLSAKYHLKMTSEVPLARGLGSSSSVIIAGIELANQLAKLNLTTEEKLELACEIEGHPDNVAPALLGNLVIASTVADKTNYVSSDFPSCKLLAFVPDYELKTVESRKVLPKELAYKEAVAASSIANVLTASLLTKNLKVAGQMIESDHFHENYRASLVPELKILREIGHEFGAYGTYLSGAGPTVMLLLPDDKLNLLTEKINEQNLSGQLYSLEVDSNGLQVKESVL.

Residue 84 to 94 participates in ATP binding; that stretch reads PLARGLGSSSS.

This sequence belongs to the GHMP kinase family. Homoserine kinase subfamily.

Its subcellular location is the cytoplasm. The enzyme catalyses L-homoserine + ATP = O-phospho-L-homoserine + ADP + H(+). The protein operates within amino-acid biosynthesis; L-threonine biosynthesis; L-threonine from L-aspartate: step 4/5. Functionally, catalyzes the ATP-dependent phosphorylation of L-homoserine to L-homoserine phosphate. This is Homoserine kinase from Lactococcus lactis subsp. lactis (strain IL1403) (Streptococcus lactis).